The sequence spans 483 residues: Wax ester synthase/diacylglycerol acyltransferase 10 (483 aa).

At 1-203 the chain is on the cytoplasmic side; it reads MTKEEVEEEP…SINAVYYAVR (203 aa). His143 (proton acceptor) is an active-site residue. The helical transmembrane segment at 204–222 threads the bilayer; the sequence is LIWNTIVDLLLLWATSLFF. Residues 223-483 lie on the Lumenal side of the membrane; the sequence is KDTETPISEG…MKDTLSGKSD (261 aa). N-linked (GlcNAc...) asparagine glycosylation is found at Asn394 and Asn399.

In the N-terminal section; belongs to the long-chain O-acyltransferase family. In terms of tissue distribution, mostly expressed in roots.

Its subcellular location is the cell membrane. It is found in the endoplasmic reticulum membrane. The catalysed reaction is an acyl-CoA + a 1,2-diacyl-sn-glycerol = a triacyl-sn-glycerol + CoA. It catalyses the reaction a long chain fatty alcohol + a fatty acyl-CoA = a wax ester + CoA. It functions in the pathway glycerolipid metabolism; triacylglycerol biosynthesis. The protein operates within lipid metabolism. Bifunctional wax ester synthase/diacylglycerol acyltransferase. Involved in cuticular wax biosynthesis. The polypeptide is Wax ester synthase/diacylglycerol acyltransferase 10 (Arabidopsis thaliana (Mouse-ear cress)).